A 220-amino-acid chain; its full sequence is Octanoyltransferase (220 aa).

The BPL/LPL catalytic domain occupies 31-211; it reads GTAADHLLLL…HFARIFDFEM (181 aa). Substrate-binding positions include 76–83, 143–145, and 156–158; these read RGGDVTYH, AIG, and GFA. Catalysis depends on Cys-174, which acts as the Acyl-thioester intermediate.

It belongs to the LipB family.

It is found in the cytoplasm. The enzyme catalyses octanoyl-[ACP] + L-lysyl-[protein] = N(6)-octanoyl-L-lysyl-[protein] + holo-[ACP] + H(+). It functions in the pathway protein modification; protein lipoylation via endogenous pathway; protein N(6)-(lipoyl)lysine from octanoyl-[acyl-carrier-protein]: step 1/2. Catalyzes the transfer of endogenously produced octanoic acid from octanoyl-acyl-carrier-protein onto the lipoyl domains of lipoate-dependent enzymes. Lipoyl-ACP can also act as a substrate although octanoyl-ACP is likely to be the physiological substrate. The protein is Octanoyltransferase of Solibacter usitatus (strain Ellin6076).